Consider the following 879-residue polypeptide: Alanine--tRNA ligase (879 aa).

Residues histidine 566, histidine 570, cysteine 668, and histidine 672 each coordinate Zn(2+).

This sequence belongs to the class-II aminoacyl-tRNA synthetase family. It depends on Zn(2+) as a cofactor.

Its subcellular location is the cytoplasm. The catalysed reaction is tRNA(Ala) + L-alanine + ATP = L-alanyl-tRNA(Ala) + AMP + diphosphate. Its function is as follows. Catalyzes the attachment of alanine to tRNA(Ala) in a two-step reaction: alanine is first activated by ATP to form Ala-AMP and then transferred to the acceptor end of tRNA(Ala). Also edits incorrectly charged Ser-tRNA(Ala) and Gly-tRNA(Ala) via its editing domain. In Clostridium novyi (strain NT), this protein is Alanine--tRNA ligase.